A 447-amino-acid polypeptide reads, in one-letter code: MALLSLNNHQSHQRLTVNPPAQGVALTGRLRVPGDKSISHRALMLGAIATGETIIEGLLLGEDPRSTAHCFRAMGAEISELNSEKIIVQGRGLGQLQEPSTVLDAGNSGTTMRLMLGLLAGQKDCLFTVTGDDSLRHRPMSRVIQPLQQMGAKIWARSNGKFAPLAVQGSQLKPIHYHSPIASAQVKSCLLLAGLTTEGDTTVTEPALSRDHSERMLQAFGAKLTIDPVTHSVTVHGPAHLTGQRVVVPGDISSAAFWLVAASILPGSELLVENVGINPTRTGVLEVLAQMGADITPENERLVTGEPVADLRVRASHLQGCTFGGEIIPRLIDEIPILAVAAAFAEGTTRIEDAAELRVKESDRLAAIASELGKMGAKVTEFDDGLEIQGGSPLQGAEVDSLTDHRIAMALAIAALGSGGQTIINRAEAAAISYPEFFGTLGQVAQG.

Residues lysine 36, serine 37, and arginine 41 each contribute to the 3-phosphoshikimate site. Residue lysine 36 coordinates phosphoenolpyruvate. Residues glycine 109 and arginine 138 each coordinate phosphoenolpyruvate. Positions 183, 185, 333, and 360 each coordinate 3-phosphoshikimate. Glutamine 185 serves as a coordination point for phosphoenolpyruvate. Aspartate 333 serves as the catalytic Proton acceptor. Phosphoenolpyruvate is bound by residues arginine 364 and arginine 406.

This sequence belongs to the EPSP synthase family. As to quaternary structure, monomer.

The protein localises to the cytoplasm. It carries out the reaction 3-phosphoshikimate + phosphoenolpyruvate = 5-O-(1-carboxyvinyl)-3-phosphoshikimate + phosphate. Its pathway is metabolic intermediate biosynthesis; chorismate biosynthesis; chorismate from D-erythrose 4-phosphate and phosphoenolpyruvate: step 6/7. In terms of biological role, catalyzes the transfer of the enolpyruvyl moiety of phosphoenolpyruvate (PEP) to the 5-hydroxyl of shikimate-3-phosphate (S3P) to produce enolpyruvyl shikimate-3-phosphate and inorganic phosphate. The chain is 3-phosphoshikimate 1-carboxyvinyltransferase from Synechocystis sp. (strain ATCC 27184 / PCC 6803 / Kazusa).